A 133-amino-acid polypeptide reads, in one-letter code: Small ribosomal subunit protein uS8 (133 aa).

The interval methionine 1 to proline 28 is disordered. Positions asparagine 16–lysine 26 are enriched in basic and acidic residues.

Belongs to the universal ribosomal protein uS8 family. In terms of assembly, part of the 30S ribosomal subunit. Contacts proteins S5 and S12.

One of the primary rRNA binding proteins, it binds directly to 16S rRNA central domain where it helps coordinate assembly of the platform of the 30S subunit. In Prochlorococcus marinus (strain NATL2A), this protein is Small ribosomal subunit protein uS8.